Here is a 497-residue protein sequence, read N- to C-terminus: Glycerol kinase (497 aa).

Thr12 lines the ADP pocket. Positions 12, 13, and 14 each coordinate ATP. Position 12 (Thr12) interacts with sn-glycerol 3-phosphate. Arg16 provides a ligand contact to ADP. Sn-glycerol 3-phosphate is bound by residues Arg82, Glu83, Tyr134, and Asp243. Glycerol contacts are provided by Arg82, Glu83, Tyr134, Asp243, and Gln244. ADP is bound by residues Thr265 and Gly308. Residues Thr265, Gly308, Gln312, and Gly409 each coordinate ATP. ADP contacts are provided by Gly409 and Asn413.

This sequence belongs to the FGGY kinase family. As to quaternary structure, homotetramer and homodimer (in equilibrium).

It carries out the reaction glycerol + ATP = sn-glycerol 3-phosphate + ADP + H(+). Its pathway is polyol metabolism; glycerol degradation via glycerol kinase pathway; sn-glycerol 3-phosphate from glycerol: step 1/1. With respect to regulation, activated by phosphorylation and inhibited by fructose 1,6-bisphosphate (FBP). In terms of biological role, key enzyme in the regulation of glycerol uptake and metabolism. Catalyzes the phosphorylation of glycerol to yield sn-glycerol 3-phosphate. The polypeptide is Glycerol kinase (Thermoanaerobacter pseudethanolicus (strain ATCC 33223 / 39E) (Clostridium thermohydrosulfuricum)).